A 110-amino-acid chain; its full sequence is Large ribosomal subunit protein uL22 (110 aa).

Belongs to the universal ribosomal protein uL22 family. In terms of assembly, part of the 50S ribosomal subunit.

Functionally, this protein binds specifically to 23S rRNA; its binding is stimulated by other ribosomal proteins, e.g. L4, L17, and L20. It is important during the early stages of 50S assembly. It makes multiple contacts with different domains of the 23S rRNA in the assembled 50S subunit and ribosome. Its function is as follows. The globular domain of the protein is located near the polypeptide exit tunnel on the outside of the subunit, while an extended beta-hairpin is found that lines the wall of the exit tunnel in the center of the 70S ribosome. The protein is Large ribosomal subunit protein uL22 of Variovorax paradoxus (strain S110).